Consider the following 676-residue polypeptide: PAS domain-containing protein cky-1 (676 aa).

Positions 45–72 (SALNNNSINVPNNNTMGMSSAGSSNGSN) are enriched in low complexity. Positions 45 to 89 (SALNNNSINVPNNNTMGMSSAGSSNGSNLVNGQQRSTRGASKQRR) are disordered. Positions 73–84 (LVNGQQRSTRGA) are enriched in polar residues. Residues 76–89 (GQQRSTRGASKQRR) are basic motif. The bHLH domain occupies 76 to 129 (GQQRSTRGASKQRRDQINVEIQKLRDLLPLSDLIKDRLFQLQVMSLGCIFIRKH). The segment at 90–129 (DQINVEIQKLRDLLPLSDLIKDRLFQLQVMSLGCIFIRKH) is helix-loop-helix motif. The PAS domain occupies 165-215 (MLMVTRSGKILHVSDNASEYLGHSVEEIMCQGDSIYDLVDGRDHGAVQAEL). The segment at 436-462 (FSCQDSPPPSEEQQPSSPQTPPFTEQP) is disordered.

Heterodimer; efficient DNA binding requires dimerization with another bHLH protein. Forms a heterodimer with ARNT homolog aha-1; binds DNA as heterodimer.

The protein resides in the nucleus. Its function is as follows. Transcription factor. Efficient DNA binding requires dimerization with another bHLH protein, such as ARNT homolog aha-1. Regulates transcription of target genes, probably acting in complex with aha-1. The polypeptide is PAS domain-containing protein cky-1 (Caenorhabditis elegans).